Reading from the N-terminus, the 124-residue chain is Glutaredoxin-2 (124 aa).

Cys13 and Cys16 are joined by a disulfide.

This sequence belongs to the glutaredoxin family. Homodimer.

It localises to the host cytoplasm. Glutaredoxin necessary for virion morphogenesis and virus replication. Functions as a thiol-disulfide transfer protein between membrane-associated OPG128 and substrates OPG095 or OPG053. The complete pathway for formation of disulfide bonds in intracellular virion membrane proteins sequentially involves oxidation of OPG072, OPG128 and OPG088. Exhibit thioltransferase and dehydroascorbate reductase activities in vitro. This is Glutaredoxin-2 (OPG088) from Bos taurus (Bovine).